Reading from the N-terminus, the 281-residue chain is Pantothenate synthetase (281 aa).

Position 30–37 (30–37) interacts with ATP; that stretch reads MGYLHEGH. Histidine 37 functions as the Proton donor in the catalytic mechanism. Glutamine 61 contributes to the (R)-pantoate binding site. Glutamine 61 is a beta-alanine binding site. Residue 147 to 150 coordinates ATP; that stretch reads GEKD. Residue glutamine 153 coordinates (R)-pantoate. ATP-binding positions include isoleucine 176 and 184 to 187; that span reads KSSR.

This sequence belongs to the pantothenate synthetase family. Homodimer.

The protein resides in the cytoplasm. The enzyme catalyses (R)-pantoate + beta-alanine + ATP = (R)-pantothenate + AMP + diphosphate + H(+). Its pathway is cofactor biosynthesis; (R)-pantothenate biosynthesis; (R)-pantothenate from (R)-pantoate and beta-alanine: step 1/1. Its function is as follows. Catalyzes the condensation of pantoate with beta-alanine in an ATP-dependent reaction via a pantoyl-adenylate intermediate. The chain is Pantothenate synthetase from Clostridium botulinum (strain Kyoto / Type A2).